The primary structure comprises 306 residues: MLIKAYSSSANLGAGFDILALAHNAFEDSVEMEAIPNSTLQVLVTGDGVPNEVDKNSASYAVYRLLSELDVKVKVKMKVIKGIPAGLGLGSSGASAVAAVVGVNNLLKLGLDKQELVRASMIGEIASSGSAHPDNVAASVYGGVVAVLNTEPVTVSPIPVNLNFSLLLFIPVLQLKDKTKKAREMLPRNVELGKMVRNSRYLSSTILGLVKGDRELLRLGLNDEIVEVARSPLFPHYEKLKKISIENNAIGACVSGAGPTIAVFVDEYSDKNKIKKEGLEICETYSQKCLVKEAKIAGGAWVERWN.

84–94 (PAGLGLGSSGA) provides a ligand contact to ATP.

Belongs to the GHMP kinase family. Homoserine kinase subfamily.

The protein resides in the cytoplasm. It catalyses the reaction L-homoserine + ATP = O-phospho-L-homoserine + ADP + H(+). Its pathway is amino-acid biosynthesis; L-threonine biosynthesis; L-threonine from L-aspartate: step 4/5. Catalyzes the ATP-dependent phosphorylation of L-homoserine to L-homoserine phosphate. This is Homoserine kinase from Sulfolobus acidocaldarius (strain ATCC 33909 / DSM 639 / JCM 8929 / NBRC 15157 / NCIMB 11770).